A 166-amino-acid chain; its full sequence is Crossover junction endodeoxyribonuclease RuvC (166 aa).

Residues D9, E70, and D144 contribute to the active site. 3 residues coordinate Mg(2+): D9, E70, and D144.

It belongs to the RuvC family. Homodimer which binds Holliday junction (HJ) DNA. The HJ becomes 2-fold symmetrical on binding to RuvC with unstacked arms; it has a different conformation from HJ DNA in complex with RuvA. In the full resolvosome a probable DNA-RuvA(4)-RuvB(12)-RuvC(2) complex forms which resolves the HJ. Mg(2+) is required as a cofactor.

The protein localises to the cytoplasm. The catalysed reaction is Endonucleolytic cleavage at a junction such as a reciprocal single-stranded crossover between two homologous DNA duplexes (Holliday junction).. Functionally, the RuvA-RuvB-RuvC complex processes Holliday junction (HJ) DNA during genetic recombination and DNA repair. Endonuclease that resolves HJ intermediates. Cleaves cruciform DNA by making single-stranded nicks across the HJ at symmetrical positions within the homologous arms, yielding a 5'-phosphate and a 3'-hydroxyl group; requires a central core of homology in the junction. The consensus cleavage sequence is 5'-(A/T)TT(C/G)-3'. Cleavage occurs on the 3'-side of the TT dinucleotide at the point of strand exchange. HJ branch migration catalyzed by RuvA-RuvB allows RuvC to scan DNA until it finds its consensus sequence, where it cleaves and resolves the cruciform DNA. The sequence is that of Crossover junction endodeoxyribonuclease RuvC from Neorickettsia sennetsu (strain ATCC VR-367 / Miyayama) (Ehrlichia sennetsu).